Here is a 689-residue protein sequence, read N- to C-terminus: E3 ubiquitin-protein ligase RNF169 (689 aa).

An RING-type zinc finger spans residues 49–88 (CAGCLETPGEAAALPCGHSLCRGCAQRAADAAGPCCPRCR). 2 disordered regions span residues 95–148 (ARRR…PAEP) and 178–238 (KLQE…PSRG). 2 stretches are compositionally biased toward basic and acidic residues: residues 110 to 128 (LGERARRGPPERCRPRRDG) and 178 to 224 (KLQE…EHCP). The UMI motif signature appears at 186–194 (EDQIHKLLP). Phosphoserine occurs at positions 228 and 230. Lys267 is covalently cross-linked (Glycyl lysine isopeptide (Lys-Gly) (interchain with G-Cter in SUMO2)). Positions 268-277 (MERSQSCSDT) are enriched in polar residues. Residues 268–299 (MERSQSCSDTGQDRAKSRLRAAPTSKAKATAM) form a disordered region. Ser320 is subject to Phosphoserine. A Glycyl lysine isopeptide (Lys-Gly) (interchain with G-Cter in SUMO2) cross-link involves residue Lys343. Phosphoserine occurs at positions 384 and 390. Thr391 carries the post-translational modification Phosphothreonine. Ser466 is modified (phosphoserine). The tract at residues 489–542 (SQTKAEQGSDRKKNTEIPLETCCSSELPVGASGTSLEREQSERSGSSPDAKLDK) is disordered. A Glycyl lysine isopeptide (Lys-Gly) (interchain with G-Cter in SUMO2) cross-link involves residue Lys492. Phosphoserine is present on Ser625. Positions 646-663 (QEEEDRQLALQLQRMFDN) match the MIU motif motif. An LR motif motif is present at residues 670-682 (RRKGSVDQYLLRS). Ser674 bears the Phosphoserine mark.

Belongs to the RNF169 family. In terms of assembly, interacts with DYRK1B. Post-translationally, phosphorylated by DYRK1A; phosphorylation increases RNF169 ability to block accumulation of TP53BP1 at the DSB sites.

The protein localises to the chromosome. It is found in the nucleus. The protein resides in the nucleoplasm. The enzyme catalyses S-ubiquitinyl-[E2 ubiquitin-conjugating enzyme]-L-cysteine + [acceptor protein]-L-lysine = [E2 ubiquitin-conjugating enzyme]-L-cysteine + N(6)-ubiquitinyl-[acceptor protein]-L-lysine.. The protein operates within protein modification; protein ubiquitination. Probable E3 ubiquitin-protein ligase that acts as a regulator of double-strand breaks (DSBs) repair following DNA damage. Functions in a non-canonical fashion to harness RNF168-mediated protein recruitment to DSB-containing chromatin, thereby contributing to regulation of DSB repair pathway utilization. Once recruited to DSB repair sites by recognizing and binding ubiquitin catalyzed by RNF168, competes with TP53BP1 and BRCA1 for association with RNF168-modified chromatin, thereby favouring homologous recombination repair (HRR) and single-strand annealing (SSA) instead of non-homologous end joining (NHEJ) mediated by TP53BP1. E3 ubiquitin-protein ligase activity is not required for regulation of DSBs repair. In Bos taurus (Bovine), this protein is E3 ubiquitin-protein ligase RNF169 (RNF169).